A 166-amino-acid polypeptide reads, in one-letter code: UBA-like domain-containing protein 2 (166 aa).

Residues 120–166 (QQPVWLPPASPTTHLHHHHHHPQPVWPPNSQPTGGPQKAMAAMDGQR) are disordered.

The protein belongs to the UBALD family.

The sequence is that of UBA-like domain-containing protein 2 (ubald2) from Xenopus tropicalis (Western clawed frog).